The sequence spans 91 residues: uncharacterized protein (91 aa).

This is an uncharacterized protein from Rickettsia conorii (strain ATCC VR-613 / Malish 7).